A 392-amino-acid chain; its full sequence is LL-diaminopimelate aminotransferase (392 aa).

2 residues coordinate substrate: Y13 and G38. Pyridoxal 5'-phosphate-binding positions include Y67, 102 to 103, Y127, N177, Y208, and 236 to 238; these read SK and SCS. Positions 103, 127, and 177 each coordinate substrate. At K239 the chain carries N6-(pyridoxal phosphate)lysine. R247 contributes to the pyridoxal 5'-phosphate binding site. Substrate is bound at residue R366.

It belongs to the class-I pyridoxal-phosphate-dependent aminotransferase family. LL-diaminopimelate aminotransferase subfamily. Homodimer. It depends on pyridoxal 5'-phosphate as a cofactor.

It catalyses the reaction (2S,6S)-2,6-diaminopimelate + 2-oxoglutarate = (S)-2,3,4,5-tetrahydrodipicolinate + L-glutamate + H2O + H(+). It functions in the pathway amino-acid biosynthesis; L-lysine biosynthesis via DAP pathway; LL-2,6-diaminopimelate from (S)-tetrahydrodipicolinate (aminotransferase route): step 1/1. In terms of biological role, involved in the synthesis of meso-diaminopimelate (m-DAP or DL-DAP), required for both lysine and peptidoglycan biosynthesis. Catalyzes the direct conversion of tetrahydrodipicolinate to LL-diaminopimelate. Can also use m-DAP instead of LL-DAP as the amino-group donor. The chain is LL-diaminopimelate aminotransferase from Gloeobacter violaceus (strain ATCC 29082 / PCC 7421).